The chain runs to 287 residues: Formamidopyrimidine-DNA glycosylase (287 aa).

The active-site Schiff-base intermediate with DNA is the proline 2. Residue glutamate 3 is the Proton donor of the active site. The active-site Proton donor; for beta-elimination activity is lysine 61. Residues histidine 95, arginine 115, and arginine 157 each contribute to the DNA site. The FPG-type zinc finger occupies 243 to 277 (NVYGRADQPCRRCGEPVRREAFMNRSSFSCPRCQP). The Proton donor; for delta-elimination activity role is filled by arginine 267.

This sequence belongs to the FPG family. Monomer. Zn(2+) is required as a cofactor.

The catalysed reaction is Hydrolysis of DNA containing ring-opened 7-methylguanine residues, releasing 2,6-diamino-4-hydroxy-5-(N-methyl)formamidopyrimidine.. It carries out the reaction 2'-deoxyribonucleotide-(2'-deoxyribose 5'-phosphate)-2'-deoxyribonucleotide-DNA = a 3'-end 2'-deoxyribonucleotide-(2,3-dehydro-2,3-deoxyribose 5'-phosphate)-DNA + a 5'-end 5'-phospho-2'-deoxyribonucleoside-DNA + H(+). In terms of biological role, involved in base excision repair of DNA damaged by oxidation or by mutagenic agents. Acts as a DNA glycosylase that recognizes and removes damaged bases. Has a preference for oxidized purines, such as 7,8-dihydro-8-oxoguanine (8-oxoG). Has AP (apurinic/apyrimidinic) lyase activity and introduces nicks in the DNA strand. Cleaves the DNA backbone by beta-delta elimination to generate a single-strand break at the site of the removed base with both 3'- and 5'-phosphates. The sequence is that of Formamidopyrimidine-DNA glycosylase from Salinispora tropica (strain ATCC BAA-916 / DSM 44818 / JCM 13857 / NBRC 105044 / CNB-440).